We begin with the raw amino-acid sequence, 227 residues long: DNA repair protein RecO (227 aa).

It belongs to the RecO family.

In terms of biological role, involved in DNA repair and RecF pathway recombination. This is DNA repair protein RecO from Pseudomonas syringae pv. syringae (strain B728a).